Reading from the N-terminus, the 529-residue chain is Endoglucanase 21 (529 aa).

The first 24 residues, 1–24 (MVAAMTMCAAVAVLLVLTSTMAAA), serve as a signal peptide directing secretion. D89 acts as the Nucleophile in catalysis. N342 is a glycosylation site (N-linked (GlcNAc...) asparagine). Catalysis depends on residues H429, D481, and E490.

Belongs to the glycosyl hydrolase 9 (cellulase E) family. Expressed in roots and flowers.

The protein localises to the secreted. The enzyme catalyses Endohydrolysis of (1-&gt;4)-beta-D-glucosidic linkages in cellulose, lichenin and cereal beta-D-glucans.. The polypeptide is Endoglucanase 21 (GLU9) (Oryza sativa subsp. japonica (Rice)).